Consider the following 427-residue polypeptide: Large ribosomal subunit protein uL4 (427 aa).

Residue alanine 2 is modified to N-acetylalanine. Lysine 14 bears the N6-acetyllysine mark. At arginine 97 the chain carries Omega-N-methylarginine. At lysine 106 the chain carries N6-acetyllysine. Lysine 239 is covalently cross-linked (Glycyl lysine isopeptide (Lys-Gly) (interchain with G-Cter in SUMO2)). Residue lysine 259 is modified to N6-acetyllysine. Threonine 266 carries the phosphothreonine modification. A phosphoserine mark is found at serine 290 and serine 295. The residue at position 300 (arginine 300) is a Citrulline. Residue lysine 327 forms a Glycyl lysine isopeptide (Lys-Gly) (interchain with G-Cter in SUMO2) linkage. N6-acetyllysine is present on residues lysine 333 and lysine 353. Lysine 364 carries the post-translational modification N6-acetyllysine; alternate. Lysine 364 is covalently cross-linked (Glycyl lysine isopeptide (Lys-Gly) (interchain with G-Cter in SUMO1); alternate). Serine 365 is subject to Phosphoserine. Residues 369 to 427 (AAVAGKKPVVGKKGKKAAVGVKKQKKPLVGKKAAATKKPAPEKKPAEKKPTTEEKKPAA) are disordered. The segment covering 377-397 (VVGKKGKKAAVGVKKQKKPLV) has biased composition (basic residues). The span at 407–427 (PAPEKKPAEKKPTTEEKKPAA) shows a compositional bias: basic and acidic residues.

It belongs to the universal ribosomal protein uL4 family. In terms of assembly, component of the large ribosomal subunit. May bind IPO9 with low affinity. Interacts with RBM3. Citrullinated by PADI4.

The protein resides in the cytoplasm. Its function is as follows. Component of the large ribosomal subunit. The ribosome is a large ribonucleoprotein complex responsible for the synthesis of proteins in the cell. This is Large ribosomal subunit protein uL4 (RPL4) from Pongo abelii (Sumatran orangutan).